A 227-amino-acid chain; its full sequence is UPF0758 protein lpp2553 (227 aa).

An MPN domain is found at Arg102–Val225. Zn(2+) is bound by residues His173, His175, and Asp186. Positions His173 to Asp186 match the JAMM motif motif.

The protein belongs to the UPF0758 family.

The protein is UPF0758 protein lpp2553 of Legionella pneumophila (strain Paris).